We begin with the raw amino-acid sequence, 472 residues long: MATKCTKCGPGYPTPLEAMKGPREEIVYLPCIYRNTGTEAPDYLATVDVDPKSPQYSQVIHRLPMPYLKDELHHSGWNTCSSCFGDSTKSRNKLILPGLISSRIYVVDVGSEPRAPKLHKVIEASEIQAKCNVSNTHTSHCLASGEVMVNTLGDLQGNGKGSFVLLDGETFEVKGTWEKPGGASPMGYDFWYQPRHNVMVSTEWAAPNVFKDGFNPAHVEAGLYGSRIFVWDWQRHEIIQTLQMTDGLIPLEIRFLHDPSATQGFVGCALSSNIQRFYKNEEGTWSVEKVIQVPSKKVKGWMLPEMPGLITDILLSLDDRFLYFSNWLHGDIRQYDISNPQKPRLTGQIFLGGSIVRGGSVQVLEDQELTCQPEPLVVKGKRIPGGPQMIQLSLDGKRLYATTSLYSDWDKQFYPDLIREGSVMLQVDVDTVNGGLKLNPNFLVDFGKEPLGPALAHELRYPGGDCSSDIWI.

Serine 467 carries the post-translational modification Phosphoserine.

It belongs to the selenium-binding protein family. Post-translationally, the N-terminus is blocked. As to expression, mainly expressed in liver.

Its subcellular location is the nucleus. The protein localises to the cytoplasm. The protein resides in the cytosol. It localises to the membrane. Functionally, selenium- and acetaminophen-binding protein which may be involved in the sensing of reactive xenobiotics in the cytoplasm. May be involved in intra-Golgi protein transport. This Mus musculus (Mouse) protein is Selenium-binding protein 2 (Selenbp2).